Here is a 4307-residue protein sequence, read N- to C-terminus: Cytoplasmic dynein 2 heavy chain 1 (4307 aa).

A stem region spans residues 1-1650; that stretch reads MANGTADVRK…CVQMVDSEFQ (1650 aa). 145-152 contributes to the ATP binding site; the sequence is LGIVLRRS. Residues 1074–1103 are a coiled coil; sequence NTLDKSAKLIKEKKIEFDDLEVTRKKLVDD. AAA regions lie at residues 1651–1875, 1938–2161, 2251–2505, and 2617–2863; these read YTYE…VLRG, ELSA…KQND, ADDF…WVLG, and HYGR…ESCK. ATP contacts are provided by residues 1689-1696, 1979-1986, 2291-2298, and 2655-2662; these read GPAGTGKT, GPSGAGKS, GPEGCGKG, and GRSGVGRR. The tract at residues 2881–3169 is stalk; sequence AISSSKKKEL…AEVSKAQETI (289 aa). Coiled coils occupy residues 2897–2982, 3109–3200, and 3408–3442; these read LQAG…KEVQ, LETE…LATL, and IQHE…SLLE. AAA regions lie at residues 3244 to 3473 and 3690 to 3905; these read LCTE…LIQE and MALF…IIDR.

Belongs to the dynein heavy chain family. As to quaternary structure, the cytoplasmic dynein complex 2 is probably composed by a heavy chain DYNC2H1 homodimer and a number of DYNC2LI1 light intermediate chains.

Its subcellular location is the cytoplasm. The protein resides in the cytoskeleton. It localises to the cilium axoneme. It is found in the cell membrane. Its function is as follows. May function as a motor for intraflagellar retrograde transport. Functions in cilia biogenesis. May play a role in transport between endoplasmic reticulum and Golgi or organization of the Golgi in cells. The chain is Cytoplasmic dynein 2 heavy chain 1 (DYNC2H1) from Homo sapiens (Human).